A 179-amino-acid polypeptide reads, in one-letter code: Large ribosomal subunit protein uL5 (179 aa).

This sequence belongs to the universal ribosomal protein uL5 family. In terms of assembly, part of the 50S ribosomal subunit; part of the 5S rRNA/L5/L18/L25 subcomplex. Contacts the 5S rRNA and the P site tRNA. Forms a bridge to the 30S subunit in the 70S ribosome.

Functionally, this is one of the proteins that bind and probably mediate the attachment of the 5S RNA into the large ribosomal subunit, where it forms part of the central protuberance. In the 70S ribosome it contacts protein S13 of the 30S subunit (bridge B1b), connecting the 2 subunits; this bridge is implicated in subunit movement. Contacts the P site tRNA; the 5S rRNA and some of its associated proteins might help stabilize positioning of ribosome-bound tRNAs. The protein is Large ribosomal subunit protein uL5 of Ruthia magnifica subsp. Calyptogena magnifica.